Reading from the N-terminus, the 525-residue chain is Arylsulfatase G (525 aa).

A signal peptide spans 1–16 (MGWLFLKVLLAGVSFS). Aspartate 44, aspartate 45, and cysteine 84 together coordinate Ca(2+). The active-site Nucleophile is the cysteine 84. Cysteine 84 carries the 3-oxoalanine (Cys) modification. N-linked (GlcNAc...) asparagine glycosylation is present at asparagine 117. Lysine 137 is a binding site for substrate. Residue histidine 139 is part of the active site. Residue serine 162 participates in substrate binding. N-linked (GlcNAc...) asparagine glycosylation occurs at asparagine 215. Histidine 251 is a binding site for substrate. Ca(2+)-binding residues include aspartate 302 and asparagine 303. Asparagine 356 and asparagine 497 each carry an N-linked (GlcNAc...) asparagine glycan.

This sequence belongs to the sulfatase family. Ca(2+) serves as cofactor. In terms of processing, N-glycosylated. N-glycosylated with both high mannose and complex type sugars. Post-translationally, the conversion to 3-oxoalanine (also known as C-formylglycine, FGly), of a serine or cysteine residue in prokaryotes and of a cysteine residue in eukaryotes, is critical for catalytic activity. The 63-kDa precursor undergoes proteolytic processing in two steps, yielding two fragments in the first step (apparent molecular masses of 44 and 18 kDa). In the second step, the 44-kDa fragment is processed further to the 34- and 10-kDa chains. The 10-kDa chain is a cleavage product of the 44-kDa fragment but linked to the 18-kDa chain through a disulfide bridge. In terms of tissue distribution, widely expressed, with very low expression in brain, lung, heart and skeletal muscle.

It localises to the lysosome. It carries out the reaction an aryl sulfate + H2O = a phenol + sulfate + H(+). The enzyme catalyses Hydrolysis of the 3-sulfate groups of the N-sulfo-D-glucosamine 3-O-sulfate units of heparin.. With respect to regulation, inhibited by phosphate. The phosphate forms a covalent bond with the active site 3-oxoalanine. Functionally, displays arylsulfatase activity at acidic pH towards artificial substrates, such as p-nitrocatechol sulfate and also, but with a lower activity towards p-nitrophenyl sulfate and 4-methylumbelliferyl sulfate. Catalyzes the hydrolysis of the 3-sulfate groups of the N-sulfo-D-glucosamine 3-O-sulfate units of heparin. The chain is Arylsulfatase G (ARSG) from Homo sapiens (Human).